The following is a 706-amino-acid chain: Cyclic nucleotide-gated ion channel 18 (706 aa).

Over 1 to 53 (MNKIRSLRCLLPETITSASTAASNRGSDGSQFSVLWRHQILDPDSNIVTYWNH) the chain is Cytoplasmic. A helical membrane pass occupies residues 54–74 (VFLITSILALFLDPFYFYVPY). Topologically, residues 75-86 (VGGPACLSIDIS) are extracellular. The helical transmembrane segment at 87–107 (LAATVTFFRTVADIFHLLHIF) threads the bilayer. Over 108–142 (MKFRTAFVARSSRVFGRGELVMDSREIAMRYLKTD) the chain is Cytoplasmic. A helical membrane pass occupies residues 143-163 (FLIDVAAMLPLPQLVIWLVIP). At 164–174 (AATNGTANHAN) the chain is on the extracellular side. The helical transmembrane segment at 175 to 195 (STLALIVLVQYIPRSFIIFPL) threads the bilayer. The Cytoplasmic portion of the chain corresponds to 196–217 (NQRIIKTTGFIAKTAWAGAAYN). The helical transmembrane segment at 218–238 (LLLYILASHVLGAMWYLSSIG) threads the bilayer. Residues 239–345 (RQFSCWSNVC…ITTSVYLGET (107 aa)) are Extracellular-facing. A helical transmembrane segment spans residues 346-366 (LFCITICIFGLILFTLLIGNM). Over 367 to 706 (QSSLQSMSVR…PDFSIDKEDV (340 aa)) the chain is Cytoplasmic. A nucleoside 3',5'-cyclic phosphate contacts are provided by residues 449-579 (FFSQ…AFRY) and glutamate 520. A calmodulin-binding region spans residues 565 to 580 (FKRLQSKKLQHAFRYY). The region spanning 585–614 (RAWGACFVQSAWRRYKRRKLAKELSLHESS) is the IQ domain. The disordered stretch occupies residues 661-706 (ANTRRGTNQKASSSSTGKKDGSSTSLKMPQLFKPDEPDFSIDKEDV). The segment covering 693 to 706 (KPDEPDFSIDKEDV) has biased composition (basic and acidic residues).

This sequence belongs to the cyclic nucleotide-gated cation channel (TC 1.A.1.5) family. Homomultimer. Interacts with CPK32. Expressed in pollen grains. Not detected in leaves, roots or root hairs.

The protein localises to the cell membrane. It is found in the cytoplasmic vesicle membrane. In terms of biological role, cyclic nucleotide-gated ion channel required for directional pollen tube growth into the transmitting tract. Acts as a Ca(2+)-permeable divalent cation-selective channel inhibited by either lanthanum or gadolinium. Regulated by CPK32 to mediate Ca(2+) transport across the plasma membrane in response to Ca(2+) oscillation. The polypeptide is Cyclic nucleotide-gated ion channel 18 (Arabidopsis thaliana (Mouse-ear cress)).